The primary structure comprises 130 residues: UPF0212 protein TSIB_1358 (130 aa).

This sequence belongs to the UPF0212 family.

The chain is UPF0212 protein TSIB_1358 from Thermococcus sibiricus (strain DSM 12597 / MM 739).